The following is a 58-amino-acid chain: MFTVFLLVVLATTGVSFTLDRASDGGNAVAKKSDVTARFNWRCCLIPACRRNHKKFCG.

The N-terminal stretch at Met-1–Ser-16 is a signal peptide. The propeptide occupies Phe-17 to Arg-38. The interval Asn-40–Arg-42 is interaction with ADRA1B. Intrachain disulfides connect Cys-43/Cys-49 and Cys-44/Cys-57. The lacks the Ser-Xaa-Pro motif that is crucial for potent interaction with nAChR stretch occupies residues Leu-45–Pro-47. Cys-57 is modified (cysteine amide).

Belongs to the conotoxin A superfamily. As to expression, expressed by the venom duct.

Its subcellular location is the secreted. Its function is as follows. Allosteric inhibitor of alpha-1B adrenergic receptors (ADRA1B). Binds to an allosteric modulatory site on transmembrane helix 6 and 7 at the base of extracellular loop 3 of ADRA1B. Also weakly inhibits alpha-1A (ADRA1A) and alpha-1D (ADRA1D) adrenergic receptors in a competitive manner. Potently inhibits contractions of vas deferens, spleen and aorta in response to noradrenaline. May also inhibits nicotinic acetylcholine receptors with a possible distinct nAChR binding mode from other alpha-conotoxins, due to a different three residue motif (lacks the Ser-Xaa-Pro motif). This is Rho-conotoxin TIA from Conus tulipa (Fish-hunting cone snail).